The sequence spans 152 residues: Transcriptional regulator MraZ (152 aa).

SpoVT-AbrB domains lie at 5-52 (ASAI…PIHE) and 81-124 (AHEV…DEQA).

The protein belongs to the MraZ family. In terms of assembly, forms oligomers.

It localises to the cytoplasm. The protein resides in the nucleoid. The sequence is that of Transcriptional regulator MraZ from Shewanella oneidensis (strain ATCC 700550 / JCM 31522 / CIP 106686 / LMG 19005 / NCIMB 14063 / MR-1).